A 152-amino-acid polypeptide reads, in one-letter code: Protein-export protein SecB (152 aa).

Belongs to the SecB family. Homotetramer, a dimer of dimers. One homotetramer interacts with 1 SecA dimer.

The protein resides in the cytoplasm. In terms of biological role, one of the proteins required for the normal export of preproteins out of the cell cytoplasm. It is a molecular chaperone that binds to a subset of precursor proteins, maintaining them in a translocation-competent state. It also specifically binds to its receptor SecA. In Dechloromonas aromatica (strain RCB), this protein is Protein-export protein SecB.